Reading from the N-terminus, the 355-residue chain is Ferrochelatase (355 aa).

Fe cation-binding residues include His214 and Glu295.

Belongs to the ferrochelatase family.

The protein resides in the cytoplasm. The catalysed reaction is heme b + 2 H(+) = protoporphyrin IX + Fe(2+). It functions in the pathway porphyrin-containing compound metabolism; protoheme biosynthesis; protoheme from protoporphyrin-IX: step 1/1. In terms of biological role, catalyzes the ferrous insertion into protoporphyrin IX. The polypeptide is Ferrochelatase (Burkholderia thailandensis (strain ATCC 700388 / DSM 13276 / CCUG 48851 / CIP 106301 / E264)).